The sequence spans 731 residues: Polyadenylate-binding protein, cytoplasmic and nuclear (731 aa).

The segment covering 1 to 10 (MSADVSTTPA) has biased composition (polar residues). The disordered stretch occupies residues 1–51 (MSADVSTTPAAENVNGAAEASPAPAAAAPSATTPEVTAVENSTPAPAANQP). Low complexity predominate over residues 17 to 39 (AAEASPAPAAAAPSATTPEVTAV). 4 consecutive RRM domains span residues 54–132 (ASLY…WSQR), 142–219 (GNVF…HHIS), 235–312 (TNVY…RAQK), and 338–472 (VNLY…LAQR). Disordered stretches follow at residues 369-429 (VMRD…SDKK) and 603-665 (GGRG…NAQT). Residues 616-627 (GMRGGPGYGQGR) are compositionally biased toward gly residues. Residues 645 to 656 (QNAAAPAGPQEG) show a composition bias toward low complexity. Residues 658-731 (AGGVNAQTLG…MRPLAFTMST (74 aa)) enclose the PABC domain.

This sequence belongs to the polyadenylate-binding protein type-1 family.

The protein localises to the cytoplasm. It localises to the nucleus. In terms of biological role, binds the poly(A) tail of mRNA. Appears to be an important mediator of the multiple roles of the poly(A) tail in mRNA biogenesis, stability and translation. In the nucleus, involved in both mRNA cleavage and polyadenylation. Is also required for efficient mRNA export to the cytoplasm. Acts in concert with a poly(A)-specific nuclease (PAN) to affect poly(A) tail shortening, which may occur concomitantly with either nucleocytoplasmic mRNA transport or translational initiation. In the cytoplasm, stimulates translation initiation and regulates mRNA decay through translation termination-coupled poly(A) shortening, probably mediated by PAN. The protein is Polyadenylate-binding protein, cytoplasmic and nuclear (pab1) of Aspergillus niger (strain ATCC MYA-4892 / CBS 513.88 / FGSC A1513).